A 115-amino-acid chain; its full sequence is MKFVLLFGVLLVTLFSYSSAEMLDDFDQADEDELLSSIEKEEARAKECTPRFYDCSHDRHSCCRSELFKDVCTCFYPEGGDNEVCTCQQPKHLKYMEKAADKAKKFGGKIKKWFG.

A signal peptide spans 1-20 (MKFVLLFGVLLVTLFSYSSA). The propeptide occupies 21 to 44 (EMLDDFDQADEDELLSSIEKEEAR). Disulfide bonds link Cys-48-Cys-63, Cys-55-Cys-72, Cys-62-Cys-87, and Cys-74-Cys-85.

Belongs to the neurotoxin 19 (CSTX) family. 01 subfamily. As to expression, expressed by the venom gland.

It localises to the secreted. This Lycosa singoriensis (Wolf spider) protein is U3-lycotoxin-Ls1a.